The chain runs to 878 residues: Alanine--tRNA ligase (878 aa).

Zn(2+) contacts are provided by histidine 558, histidine 562, cysteine 663, and histidine 667.

The protein belongs to the class-II aminoacyl-tRNA synthetase family. Zn(2+) is required as a cofactor.

Its subcellular location is the cytoplasm. It carries out the reaction tRNA(Ala) + L-alanine + ATP = L-alanyl-tRNA(Ala) + AMP + diphosphate. Functionally, catalyzes the attachment of alanine to tRNA(Ala) in a two-step reaction: alanine is first activated by ATP to form Ala-AMP and then transferred to the acceptor end of tRNA(Ala). Also edits incorrectly charged Ser-tRNA(Ala) and Gly-tRNA(Ala) via its editing domain. This chain is Alanine--tRNA ligase, found in Mycoplasmopsis synoviae (strain 53) (Mycoplasma synoviae).